The sequence spans 429 residues: Phosphomethylpyrimidine synthase (429 aa).

Residues Asn-66, Met-95, Tyr-124, His-163, 185 to 187 (SRG), 226 to 229 (DGLR), and Glu-265 contribute to the substrate site. His-269 is a binding site for Zn(2+). Residue Tyr-292 participates in substrate binding. His-333 lines the Zn(2+) pocket. The [4Fe-4S] cluster site is built by Cys-407, Cys-410, and Cys-414.

The protein belongs to the ThiC family. [4Fe-4S] cluster serves as cofactor.

It carries out the reaction 5-amino-1-(5-phospho-beta-D-ribosyl)imidazole + S-adenosyl-L-methionine = 4-amino-2-methyl-5-(phosphooxymethyl)pyrimidine + CO + 5'-deoxyadenosine + formate + L-methionine + 3 H(+). Its pathway is cofactor biosynthesis; thiamine diphosphate biosynthesis. Its function is as follows. Catalyzes the synthesis of the hydroxymethylpyrimidine phosphate (HMP-P) moiety of thiamine from aminoimidazole ribotide (AIR) in a radical S-adenosyl-L-methionine (SAM)-dependent reaction. In Pyrococcus furiosus (strain ATCC 43587 / DSM 3638 / JCM 8422 / Vc1), this protein is Phosphomethylpyrimidine synthase.